The primary structure comprises 255 residues: MPATDRFSDRATLARSVRLLTAFRFEQSAPDRFYGALADDTVAMVGDLWESATGESQAGLTLLDVGGGPGYFASAFTAAGVNYIGVEPDPREMHAAAALTHERAGTFVRASGTALPFADDSVDVCLSSNVAEHVAQPWRLGDEMLRVTRPGGLAVLSYTVWLGPFGGHEMGLTHYLGGRRAAEMYTRRHGHRPKNDYGSSLFAVHARDGLRWAQGTGALLAAFPRYHPRWAWGLTKVPGLREFLVSNLVLVLRPC.

This sequence belongs to the methyltransferase superfamily.

This is an uncharacterized protein from Mycolicibacterium vanbaalenii (strain DSM 7251 / JCM 13017 / BCRC 16820 / KCTC 9966 / NRRL B-24157 / PYR-1) (Mycobacterium vanbaalenii).